Here is a 227-residue protein sequence, read N- to C-terminus: MAGSVAIVGIFVALLAVAGEAAVFTVVNQCPFTVWAASVPVGGGRQLNRGESWRITAPAGTTAARIWARTGCKFDASGRGSCRTGDCGGVLQCTGYGRAPNTLAEYALKQFNNLDFFDISLIDGFNVPMSFLPDGGSGCSRGPRCAVDVNARCPAELRQDGVCNNACPVFKKDEYCCVGSAANDCHPTNYSRYFKGQCPDAYSYPKDDATSTFTCPAGTNYKVVFCP.

An N-terminal signal peptide occupies residues 1 to 20 (MAGSVAIVGIFVALLAVAGE). 8 cysteine pairs are disulfide-bonded: Cys30/Cys226, Cys72/Cys82, Cys87/Cys93, Cys139/Cys215, Cys145/Cys198, Cys153/Cys163, Cys167/Cys176, and Cys177/Cys185.

It belongs to the thaumatin family.

Has antifungal activity. Inhibits Candida albicans and Trichoderma reesei; marginal inhibition observed against Alternaria solani and Neurospora crassa. The protein is Zeamatin (Zlp) of Zea mays (Maize).